The sequence spans 72 residues: uncharacterized protein (72 aa).

This is an uncharacterized protein from Homo sapiens (Human).